The chain runs to 837 residues: PE-PGRS family protein PE_PGRS4 (837 aa).

Residues 4–94 enclose the PE domain; the sequence is VIAAPEVIAA…GAYAAAEAAA (91 aa). Over residues 811–825 the composition is skewed to gly residues; it reads NGGKAGGTPGAGGTS. Residues 811–837 form a disordered region; that stretch reads NGGKAGGTPGAGGTSGLIIGENGLNGL. The span at 826 to 837 shows a compositional bias: low complexity; the sequence is GLIIGENGLNGL.

Belongs to the mycobacterial PE family. PGRS subfamily.

In Mycobacterium tuberculosis (strain ATCC 25618 / H37Rv), this protein is PE-PGRS family protein PE_PGRS4.